A 165-amino-acid chain; its full sequence is 3-hydroxyacyl-[acyl-carrier-protein] dehydratase FERN, mitochondrial (165 aa).

A mitochondrion-targeting transit peptide spans Met1 to Phe35. The region spanning Ala36–Lys124 is the MaoC-like domain.

In terms of assembly, homodimer.

The protein localises to the mitochondrion. The enzyme catalyses a (3R)-hydroxyacyl-[ACP] = a (2E)-enoyl-[ACP] + H2O. The protein operates within lipid metabolism; fatty acid biosynthesis. 3-hydroxyl-[acyl-carrier-protein] (3-hydroxyl-ACP) dehydratase required for mitochondrial fatty acid synthesis (mtFAS). Essential for photorespiration, tomato morphogenesis and plant development, probably by influencing mitochondrial membrane lipid composition and other lipid metabolic pathways, and by contributing to energy supply and reactive oxygen species (ROS) homeostasis. The chain is 3-hydroxyacyl-[acyl-carrier-protein] dehydratase FERN, mitochondrial from Solanum lycopersicum (Tomato).